Here is a 288-residue protein sequence, read N- to C-terminus: Elongation factor Ts (288 aa).

Residues 79 to 82 form an involved in Mg(2+) ion dislocation from EF-Tu region; the sequence is TDFV.

It belongs to the EF-Ts family.

Its subcellular location is the cytoplasm. Its function is as follows. Associates with the EF-Tu.GDP complex and induces the exchange of GDP to GTP. It remains bound to the aminoacyl-tRNA.EF-Tu.GTP complex up to the GTP hydrolysis stage on the ribosome. The sequence is that of Elongation factor Ts from Ehrlichia ruminantium (strain Welgevonden).